The following is an 826-amino-acid chain: Zinc phosphodiesterase ELAC protein 2 (826 aa).

The transit peptide at 1 to 16 directs the protein to the mitochondrion; sequence MWALCSLLRSAAGRTM. 2 disordered regions span residues 16 to 51 and 188 to 231; these read MSQG…PSGC and EQRR…VSQR. A compositionally biased stretch (basic and acidic residues) spans 27–38; sequence ARRERPRKDPLR. A phosphoserine mark is found at serine 199, serine 208, serine 212, serine 229, serine 618, and serine 736. Positions 208–224 are enriched in basic and acidic residues; sequence SPERSSDSESNENEPHL. Positions 798–826 are disordered; that stretch reads ELAGGLEDGEPQQKRAHTEEPQAKKVRAQ. Over residues 808–820 the composition is skewed to basic and acidic residues; sequence PQQKRAHTEEPQA.

Belongs to the RNase Z family. Homodimer. Interacts with PTCD1. Requires Zn(2+) as cofactor.

The protein localises to the mitochondrion. The protein resides in the mitochondrion matrix. It localises to the mitochondrion nucleoid. It is found in the nucleus. The catalysed reaction is Endonucleolytic cleavage of RNA, removing extra 3' nucleotides from tRNA precursor, generating 3' termini of tRNAs. A 3'-hydroxy group is left at the tRNA terminus and a 5'-phosphoryl group is left at the trailer molecule.. In terms of biological role, zinc phosphodiesterase, which displays mitochondrial tRNA 3'-processing endonuclease activity. Involved in tRNA maturation, by removing a 3'-trailer from precursor tRNA. Associates with mitochondrial DNA complexes at the nucleoids to initiate RNA processing and ribosome assembly. This chain is Zinc phosphodiesterase ELAC protein 2 (ELAC2), found in Pan troglodytes (Chimpanzee).